The following is a 943-amino-acid chain: UvrABC system protein A (943 aa).

Residue 32 to 39 coordinates ATP; the sequence is GLSGSGKS. The C4-type zinc-finger motif lies at 251 to 278; that stretch reads CPVCGFTVPELEPRLFSFNAPFGSCSEC. 2 ABC transporter domains span residues 308 to 589 and 609 to 937; these read WNPI…SKSI and GNGR…HYLK. Residue 641–648 participates in ATP binding; it reads GVSGSGKS. Residues 740–766 form a C4-type zinc finger; it reads CEACSGDGIIKIEMHFLPDVYVACEVC.

The protein belongs to the ABC transporter superfamily. UvrA family. In terms of assembly, forms a heterotetramer with UvrB during the search for lesions.

It localises to the cytoplasm. In terms of biological role, the UvrABC repair system catalyzes the recognition and processing of DNA lesions. UvrA is an ATPase and a DNA-binding protein. A damage recognition complex composed of 2 UvrA and 2 UvrB subunits scans DNA for abnormalities. When the presence of a lesion has been verified by UvrB, the UvrA molecules dissociate. The protein is UvrABC system protein A of Streptococcus pneumoniae serotype 4 (strain ATCC BAA-334 / TIGR4).